A 379-amino-acid polypeptide reads, in one-letter code: DnaJ homolog subfamily B member 14 (379 aa).

At 1–244 (MEGNRDEAEK…GHEREEERGD (244 aa)) the chain is on the cytoplasmic side. Residues 55-94 (STAGNSPHCRKPSGSGDQSKPNCTKDSTSGSGEGGKGYTK) are disordered. A compositionally biased stretch (polar residues) spans 69–84 (SGDQSKPNCTKDSTSG). The 65-residue stretch at 108-172 (NYYEVLGVTK…EKRKQYDLTG (65 aa)) folds into the J domain. The disordered stretch occupies residues 219–241 (SNGRAGYSQQHQHRHSGHEREEE). The chain crosses the membrane as a helical span at residues 245-265 (GGFSVFIQLMPIIVLILVSLL). Topologically, residues 266 to 379 (SQLMVSNPPY…ERLTSLYKGG (114 aa)) are lumenal.

It belongs to the DnaJ family. DNAJB12/DNAJB14 subfamily. As to quaternary structure, interacts (via J domain) with HSPA8/Hsc70. Forms a multiprotein complex, at least composed of DNAJB12, DNAJB14, HSPA8/Hsc70 and SGTA; interaction with DNAJB14 and HSPA8/Hsc70 is direct.

It is found in the endoplasmic reticulum membrane. The protein localises to the nucleus membrane. In terms of biological role, acts as a co-chaperone with HSPA8/Hsc70; required to promote protein folding and trafficking, prevent aggregation of client proteins, and promote unfolded proteins to endoplasmic reticulum-associated degradation (ERAD) pathway. Acts by determining HSPA8/Hsc70's ATPase and polypeptide-binding activities. Can also act independently of HSPA8/Hsc70: together with DNAJB12, acts as a chaperone that promotes maturation of potassium channels KCND2 and KCNH2 by stabilizing nascent channel subunits and assembling them into tetramers. While stabilization of nascent channel proteins is dependent on HSPA8/Hsc70, the process of oligomerization of channel subunits is independent of HSPA8/Hsc70. When overexpressed, forms membranous structures together with DNAJB12 and HSPA8/Hsc70 within the nucleus; the role of these structures, named DJANGOs, is still unclear. Its function is as follows. (Microbial infection) In case of infection by polyomavirus, involved in the virus endoplasmic reticulum membrane penetration and infection. The protein is DnaJ homolog subfamily B member 14 of Homo sapiens (Human).